We begin with the raw amino-acid sequence, 141 residues long: Putative nickel-responsive regulator (141 aa).

Residues H80, H91, H93, and C99 each coordinate Ni(2+).

The protein belongs to the transcriptional regulatory CopG/NikR family. Homotetramer. Requires Ni(2+) as cofactor.

Functionally, transcriptional regulator. This is Putative nickel-responsive regulator from Methanocaldococcus jannaschii (strain ATCC 43067 / DSM 2661 / JAL-1 / JCM 10045 / NBRC 100440) (Methanococcus jannaschii).